A 170-amino-acid chain; its full sequence is Lipoprotein signal peptidase (170 aa).

3 helical membrane passes run 5–25 (VYHQYWFWYLAAFVVFLLDQG), 70–90 (WFFTIVAVAASVLLIVWICRV), and 98–118 (AFALSFILGGAVGNLYDRIIH). Residues Asp-123 and Asp-141 contribute to the active site. A helical transmembrane segment spans residues 137–157 (FNLADAAISLGAMVLIADLFI).

The protein belongs to the peptidase A8 family.

It is found in the cell inner membrane. It catalyses the reaction Release of signal peptides from bacterial membrane prolipoproteins. Hydrolyzes -Xaa-Yaa-Zaa-|-(S,diacylglyceryl)Cys-, in which Xaa is hydrophobic (preferably Leu), and Yaa (Ala or Ser) and Zaa (Gly or Ala) have small, neutral side chains.. The protein operates within protein modification; lipoprotein biosynthesis (signal peptide cleavage). In terms of biological role, this protein specifically catalyzes the removal of signal peptides from prolipoproteins. The protein is Lipoprotein signal peptidase of Cellvibrio japonicus (strain Ueda107) (Pseudomonas fluorescens subsp. cellulosa).